A 1458-amino-acid polypeptide reads, in one-letter code: RNA-directed RNA polymerase P1 (1458 aa).

The segment at L148–N168 is disordered. The RdRp catalytic domain occupies V686–E894. A disordered region spans residues D971–N993. Over residues N979 to S989 the composition is skewed to basic residues.

The protein belongs to the reoviridae RNA-directed RNA polymerase family.

It is found in the virion. The protein resides in the host cytoplasm. The enzyme catalyses RNA(n) + a ribonucleoside 5'-triphosphate = RNA(n+1) + diphosphate. RNA-directed RNA polymerase that is involved in both transcription and genome replication. Together with the capping enzyme P5 and protein P7, forms an enzyme complex positioned near the channels situated at each of the five-fold vertices of the core. The protein is RNA-directed RNA polymerase P1 of Nephotettix cincticeps (Green rice leafhopper).